The chain runs to 689 residues: Glycine--tRNA ligase beta subunit (689 aa).

This sequence belongs to the class-II aminoacyl-tRNA synthetase family. In terms of assembly, tetramer of two alpha and two beta subunits.

It is found in the cytoplasm. The enzyme catalyses tRNA(Gly) + glycine + ATP = glycyl-tRNA(Gly) + AMP + diphosphate. The chain is Glycine--tRNA ligase beta subunit from Lacticaseibacillus casei (strain BL23) (Lactobacillus casei).